The chain runs to 165 residues: UPF0114 protein in repA1-repA2 intergenic region (165 aa).

The next 3 membrane-spanning stretches (helical) occupy residues 10-32 (YASR…LLTL), 53-75 (LVLV…MVMF), and 134-156 (DQIM…MACI).

This sequence belongs to the UPF0114 family.

The protein resides in the cell membrane. The chain is UPF0114 protein in repA1-repA2 intergenic region from Buchnera aphidicola subsp. Baizongia pistaciae (strain Bp).